A 516-amino-acid polypeptide reads, in one-letter code: Putative GTP-binding protein 6 (516 aa).

Residues 18-39 are compositionally biased toward low complexity; that stretch reads GRGRSAPRAAAPSCPARALAAV. The segment at 18–82 is disordered; it reads GRGRSAPRAA…PEDADENAEE (65 aa). Positions 57-67 are enriched in basic and acidic residues; it reads LRADGGRSRTG. Residues 68–82 are compositionally biased toward acidic residues; it reads DDEEEPEDADENAEE. The 165-residue stretch at 295–459 folds into the Hflx-type G domain; the sequence is PVISVVGYTN…ELDAAVLKAT (165 aa). GTP-binding positions include 301–308, 327–331, 349–352, 418–421, and 437–439; these read GYTNCGKT, FATLD, DTIG, NKVD, and SAL. Thr-308 and Thr-329 together coordinate Mg(2+).

Belongs to the TRAFAC class OBG-HflX-like GTPase superfamily. HflX GTPase family. Mg(2+) is required as a cofactor. As to expression, ubiquitously expressed.

This chain is Putative GTP-binding protein 6 (GTPBP6), found in Homo sapiens (Human).